Reading from the N-terminus, the 342-residue chain is Succinylglutamate desuccinylase (342 aa).

Positions 63, 66, and 155 each coordinate Zn(2+). E219 is a catalytic residue.

Belongs to the AspA/AstE family. Succinylglutamate desuccinylase subfamily. Zn(2+) is required as a cofactor.

The enzyme catalyses N-succinyl-L-glutamate + H2O = L-glutamate + succinate. It functions in the pathway amino-acid degradation; L-arginine degradation via AST pathway; L-glutamate and succinate from L-arginine: step 5/5. Functionally, transforms N(2)-succinylglutamate into succinate and glutamate. In Vibrio parahaemolyticus serotype O3:K6 (strain RIMD 2210633), this protein is Succinylglutamate desuccinylase.